A 193-amino-acid chain; its full sequence is MNFLAHLHLAHLAESSLSGNLLADFVRGNPEESFPPDVVAGIHMHRRIDVLTDNLPEVREAREWFRSETRRVAPITLDVMWDHFLSRHWSQLSPDFPLQEFVCYAREQVMTILPDSPPRFINLNNYLWSEQWLVRYRDMDFIQNVLNGMASRRPRLDALRDSWYDLDAHYDALETRFWQFYPRMMAQASHKAL.

This sequence belongs to the AcpH family.

It carries out the reaction holo-[ACP] + H2O = apo-[ACP] + (R)-4'-phosphopantetheine + H(+). Functionally, converts holo-ACP to apo-ACP by hydrolytic cleavage of the phosphopantetheine prosthetic group from ACP. The chain is Acyl carrier protein phosphodiesterase from Escherichia coli O139:H28 (strain E24377A / ETEC).